A 323-amino-acid polypeptide reads, in one-letter code: Melanocortin receptor 3 (323 aa).

Over 1–37 (MNASCCLPSVQPTLPNGSEHLQAPFFSNQSSSAFCEQ) the chain is Extracellular. N-linked (GlcNAc...) asparagine glycans are attached at residues Asn-2, Asn-16, and Asn-28. Residues 38 to 63 (VFIKPEVFLSLGIVSLLENILVILAV) form a helical membrane-spanning segment. Residues 64–75 (VRNGNLHSPMYF) are Cytoplasmic-facing. The chain crosses the membrane as a helical span at residues 76–100 (FLCSLAVADMLVSVSNALETIMIAI). Topologically, residues 101-118 (VHSDYLTFEDQFIQHMDN) are extracellular. A helical transmembrane segment spans residues 119 to 140 (IFDSMICISLVASICNLLAIAV). Topologically, residues 141 to 160 (DRYVTIFYALRYHSIMTVRK) are cytoplasmic. A helical transmembrane segment spans residues 161–181 (ALTLIVAIWVCCGVCGVVFIV). Residues 182-186 (YSESK) lie on the Extracellular side of the membrane. A helical transmembrane segment spans residues 187-210 (MVIVCLITMFFAMMLLMGTLYVHM). At 211–245 (FLFARLHVKRIAALPPADGVAPQQHSCMKGAVTIT) the chain is on the cytoplasmic side. Residues 246–268 (ILLGVFIFCWAPFFLHLVLIITC) form a helical membrane-spanning segment. Topologically, residues 269–277 (PTNPYCICY) are extracellular. The chain crosses the membrane as a helical span at residues 278-301 (TAHFNTYLVLIMCNSVIDPLIYAF). Topologically, residues 302–323 (RSLELRNTFREILCGCNGMNLG) are cytoplasmic. Cys-315 is lipidated: S-palmitoyl cysteine.

The protein belongs to the G-protein coupled receptor 1 family. In terms of tissue distribution, brain, placental, and gut tissues.

It localises to the cell membrane. In terms of biological role, receptor for MSH (alpha, beta and gamma) and ACTH. This receptor is mediated by G proteins which activate adenylate cyclase. Required for expression of anticipatory patterns of activity and wakefulness during periods of limited nutrient availability and for the normal regulation of circadian clock activity in the brain. The sequence is that of Melanocortin receptor 3 (MC3R) from Homo sapiens (Human).